Reading from the N-terminus, the 192-residue chain is Cell division protein SepF (192 aa).

The interval 154–192 (QEEPAPSNVTTTTQQSEETISESVTAPEPAWGTPVASAI) is disordered. The segment covering 162 to 178 (VTTTTQQSEETISESVT) has biased composition (low complexity).

The protein belongs to the SepF family. As to quaternary structure, homodimer. Interacts with FtsZ.

The protein resides in the cytoplasm. Cell division protein that is part of the divisome complex and is recruited early to the Z-ring. Probably stimulates Z-ring formation, perhaps through the cross-linking of FtsZ protofilaments. Its function overlaps with FtsA. This Prochlorococcus marinus (strain MIT 9211) protein is Cell division protein SepF.